The following is a 427-amino-acid chain: Tol-Pal system protein TolB (427 aa).

An N-terminal signal peptide occupies residues 1-27 (MPVSLLRALLVFSLLCLGLSATRAAHA).

The protein belongs to the TolB family. The Tol-Pal system is composed of five core proteins: the inner membrane proteins TolA, TolQ and TolR, the periplasmic protein TolB and the outer membrane protein Pal. They form a network linking the inner and outer membranes and the peptidoglycan layer.

The protein resides in the periplasm. Part of the Tol-Pal system, which plays a role in outer membrane invagination during cell division and is important for maintaining outer membrane integrity. This is Tol-Pal system protein TolB from Thiobacillus denitrificans (strain ATCC 25259 / T1).